We begin with the raw amino-acid sequence, 305 residues long: Ribonuclease BN (305 aa).

His64, His66, Asp68, His69, His141, Asp212, and His270 together coordinate Zn(2+). The Proton acceptor role is filled by Asp68.

This sequence belongs to the RNase Z family. RNase BN subfamily. Homodimer. Zn(2+) serves as cofactor.

In terms of biological role, zinc phosphodiesterase, which has both exoribonuclease and endoribonuclease activities. The protein is Ribonuclease BN of Shigella flexneri.